Here is a 92-residue protein sequence, read N- to C-terminus: Dolichol-phosphate mannosyltransferase subunit 3 (92 aa).

2 consecutive transmembrane segments (helical) span residues 8–28 and 37–57; these read LWAL…ALGL and VLWP…LGTV.

The protein belongs to the DPM3 family. Component of the dolichol-phosphate mannose (DPM) synthase complex composed of DPM1, DPM2 and DPM3; within the complex, associates with DPM1 via its C-terminal domain and with DPM2 via its N-terminal portion. This interaction stabilizes DPM1 protein.

It is found in the endoplasmic reticulum membrane. It functions in the pathway protein modification; protein glycosylation. Its function is as follows. Stabilizer subunit of the dolichol-phosphate mannose (DPM) synthase complex; tethers catalytic subunit DPM1 to the endoplasmic reticulum. This chain is Dolichol-phosphate mannosyltransferase subunit 3 (DPM3), found in Bos taurus (Bovine).